We begin with the raw amino-acid sequence, 189 residues long: Putative manganese efflux pump MntP (189 aa).

A run of 6 helical transmembrane segments spans residues 3 to 23, 41 to 61, 65 to 85, 104 to 124, 132 to 152, and 167 to 187; these read LSATIILAFAMSMDAFAASIG, LIFGVIEAITPLIGWCIGLFA, IMEWDHWIAFSLLFILGCRMI, FWVLVTTAIATSLDAMAIGVG, IVHTAMAIGLATMIMATLGML, and IIGGIVLIGIGFNILYEHMHL.

Belongs to the MntP (TC 9.B.29) family.

It is found in the cell inner membrane. Functionally, probably functions as a manganese efflux pump. The polypeptide is Putative manganese efflux pump MntP (Yersinia pseudotuberculosis serotype O:1b (strain IP 31758)).